We begin with the raw amino-acid sequence, 112 residues long: Nitrogen regulatory protein P-II (112 aa).

Y51 is subject to O-UMP-tyrosine.

It belongs to the P(II) protein family. As to quaternary structure, homotrimer.

Its function is as follows. In nitrogen-limiting conditions, when the ratio of Gln to 2-ketoglutarate decreases, P-II is uridylylated to P-II-UMP. P-II-UMP allows the deadenylation of glutamine synthetase (GS), thus activating the enzyme. Conversely, in nitrogen excess P-II is deuridylated and promotes the adenylation of GS. P-II indirectly controls the transcription of the GS gene (glnA). P-II prevents NR-II-catalyzed conversion of NR-I to NR-I-phosphate, the transcriptional activator of glnA. When P-II is uridylylated to P-II-UMP, these events are reversed. The protein is Nitrogen regulatory protein P-II (glnB) of Bradyrhizobium diazoefficiens (strain JCM 10833 / BCRC 13528 / IAM 13628 / NBRC 14792 / USDA 110).